An 869-amino-acid polypeptide reads, in one-letter code: Protein translocase subunit SecA (869 aa).

ATP-binding positions include Gln88, 106–110 (GEGKT), and Asp509. Positions 818-840 (QDEGLKFNQREGEDAPAVREKKI) are enriched in basic and acidic residues. Residues 818 to 869 (QDEGLKFNQREGEDAPAVREKKIPRNSPCPCGSGKKYKDCCGKSGPKKGILA) form a disordered region. Zn(2+) contacts are provided by Cys846, Cys848, Cys857, and Cys858.

This sequence belongs to the SecA family. In terms of assembly, monomer and homodimer. Part of the essential Sec protein translocation apparatus which comprises SecA, SecYEG and auxiliary proteins SecDF-YajC and YidC. Zn(2+) serves as cofactor.

Its subcellular location is the cell inner membrane. It localises to the cytoplasm. It catalyses the reaction ATP + H2O + cellular proteinSide 1 = ADP + phosphate + cellular proteinSide 2.. Part of the Sec protein translocase complex. Interacts with the SecYEG preprotein conducting channel. Has a central role in coupling the hydrolysis of ATP to the transfer of proteins into and across the cell membrane, serving as an ATP-driven molecular motor driving the stepwise translocation of polypeptide chains across the membrane. The polypeptide is Protein translocase subunit SecA (Campylobacter curvus (strain 525.92)).